A 469-amino-acid polypeptide reads, in one-letter code: Cyclin-dependent kinase 14 (469 aa).

Residues S24, S78, and S95 each carry the phosphoserine modification. A disordered region spans residues 103 to 133 (FKTSSTGKESPKVRRHSSPSSPTSPKFGKAD). S134 bears the Phosphoserine mark. In terms of domain architecture, Protein kinase spans 135-419 (YEKLEKLGEG…AQAALSHEYF (285 aa)). Residues 141 to 149 (LGEGSYATV) and K164 each bind ATP. Residue D256 is the Proton acceptor of the active site. The disordered stretch occupies residues 449–469 (ESMRAFGKNNSYGKSLSNSKH). Over residues 456 to 469 (KNNSYGKSLSNSKH) the composition is skewed to polar residues.

The protein belongs to the protein kinase superfamily. CMGC Ser/Thr protein kinase family. CDC2/CDKX subfamily. Found in a complex with LRP6, CCNY and CAPRIN2 during G2/M stage; CAPRIN2 functions as a scaffold for the complex by binding to CCNY via its N terminus and to CDK14 via its C terminus. Interacts with CCNY; CCNY mediates its recruitment to the plasma membrane and promotes phosphorylation of LRP6. Interacts with CCDN3 and CDKN1A. Interacts with SEPT8. Interacts with 14-3-3 proteina YWHAB, YWHAE, YWHAH and YWHAQ. As to expression, highly expressed in brain, pancreas, kidney, heart, testis and ovary. Also detected at lower levels in other tissues except in spleen and thymus where expression is barely detected.

It is found in the cell membrane. The protein resides in the cytoplasm. It localises to the nucleus. It catalyses the reaction L-seryl-[protein] + ATP = O-phospho-L-seryl-[protein] + ADP + H(+). The catalysed reaction is L-threonyl-[protein] + ATP = O-phospho-L-threonyl-[protein] + ADP + H(+). Its activity is regulated as follows. Serine/threonine-protein kinase activity is promoted by associated cyclins CCDN3 and CCNY and repressed by CDKN1A. Its function is as follows. Serine/threonine-protein kinase involved in the control of the eukaryotic cell cycle, whose activity is controlled by an associated cyclin. Acts as a cell-cycle regulator of Wnt signaling pathway during G2/M phase by mediating the phosphorylation of LRP6 at 'Ser-1490', leading to the activation of the Wnt signaling pathway. Acts as a regulator of cell cycle progression and cell proliferation via its interaction with CCDN3. Phosphorylates RB1 in vitro, however the relevance of such result remains to be confirmed in vivo. May also play a role in meiosis, neuron differentiation and may indirectly act as a negative regulator of insulin-responsive glucose transport. This chain is Cyclin-dependent kinase 14 (CDK14), found in Homo sapiens (Human).